A 384-amino-acid chain; its full sequence is 3,7-dimethylxanthine N-methyltransferase 1 (384 aa).

S-adenosyl-L-homocysteine is bound by residues Tyr18, Cys61, Asn66, Asp100, Leu101, Ser139, Phe140, and Cys156. A theobromine-binding site is contributed by Tyr157. Cys158 contributes to the S-adenosyl-L-homocysteine binding site. Theobromine-binding residues include His160 and Trp161. Asn178 provides a ligand contact to Mg(2+). Ser237 provides a ligand contact to theobromine. Asp260, Phe262, and Asn263 together coordinate Mg(2+). Position 368 (Tyr368) interacts with theobromine.

It belongs to the methyltransferase superfamily. Type-7 methyltransferase family. Requires Mg(2+) as cofactor. As to expression, highly expressed in developing endosperm and immature fruits (grains). Detected in young leaves and flower buds, but not in mature fruits.

It catalyses the reaction theobromine + S-adenosyl-L-methionine = caffeine + S-adenosyl-L-homocysteine + H(+). The catalysed reaction is 1,7-dimethylxanthine + S-adenosyl-L-methionine = caffeine + S-adenosyl-L-homocysteine + H(+). It carries out the reaction 7-methylxanthine + S-adenosyl-L-methionine = theobromine + S-adenosyl-L-homocysteine + H(+). It participates in alkaloid biosynthesis. Its function is as follows. Involved in the biosynthesis of caffeine. Catalyzes the conversion of 7-methylxanthine to caffeine, likely via theobromine as an intermediate. This chain is 3,7-dimethylxanthine N-methyltransferase 1, found in Coffea arabica (Arabian coffee).